A 454-amino-acid chain; its full sequence is MEYLNDKDQHLIDKLSKKINDNNQYLGFLNTNTKELTHRYHIYPAMMIPQLAKEFIELTQQVKPEIKKLYDPFMGSGTSLVEGLAHGLEVYGTDINPLSQMMSKAKTTPIEPSKLSRAISDLEYSIREMTILYHEGNYKISNLPDFDRIDFWFKEEVIISLQLIKNCINEFIEDDLKTFFMAAFSETVRHVSNTRNNEFKLYRMAPEKLEIWNPNVTEEFLKRVYRNELGNMDFYRQLENVGNYSPKTIINKQSNIKLPEEFKDEMFDIVVTSPPYGDSKTTVAYGQFSRLSAQWLDLKIDDETKINQLDNVMLGGKTDKNIIVNDVLEYLNSPTSKSVFNLISHKDEKRALEVLQFYVDLDKSIKETTRVMKPESYQFWVVANRTVKMISIPTDIIISELFKKYNVHHLYSFYRKIPNKRMPSKNSPTNKIGNHSVTMTSEIILMLKNYINKS.

It belongs to the N(4)/N(6)-methyltransferase family. N(4) subfamily.

The catalysed reaction is a 2'-deoxycytidine in DNA + S-adenosyl-L-methionine = an N(4)-methyl-2'-deoxycytidine in DNA + S-adenosyl-L-homocysteine + H(+). Its function is as follows. An alpha subtype methylase, recognizes the double-stranded sequence 5'-CCWGG-3', methylatES C-2 on both strands, and protects the DNA from cleavage by the MvaI endonuclease. This is Type II methyltransferase M.MvaI from Kocuria varians (Micrococcus varians).